The sequence spans 388 residues: Alanine racemase (388 aa).

Lys-44 (proton acceptor; specific for D-alanine) is an active-site residue. Lys-44 is modified (N6-(pyridoxal phosphate)lysine). Arg-142 provides a ligand contact to substrate. Tyr-273 (proton acceptor; specific for L-alanine) is an active-site residue. Met-321 is a substrate binding site.

It belongs to the alanine racemase family. It depends on pyridoxal 5'-phosphate as a cofactor.

The catalysed reaction is L-alanine = D-alanine. The protein operates within amino-acid biosynthesis; D-alanine biosynthesis; D-alanine from L-alanine: step 1/1. In terms of biological role, catalyzes the interconversion of L-alanine and D-alanine. May also act on other amino acids. The polypeptide is Alanine racemase (alr) (Mycobacterium avium (strain 104)).